The primary structure comprises 93 residues: Aspartyl/glutamyl-tRNA(Asn/Gln) amidotransferase subunit C (93 aa).

This sequence belongs to the GatC family. As to quaternary structure, heterotrimer of A, B and C subunits.

It catalyses the reaction L-glutamyl-tRNA(Gln) + L-glutamine + ATP + H2O = L-glutaminyl-tRNA(Gln) + L-glutamate + ADP + phosphate + H(+). The catalysed reaction is L-aspartyl-tRNA(Asn) + L-glutamine + ATP + H2O = L-asparaginyl-tRNA(Asn) + L-glutamate + ADP + phosphate + 2 H(+). Its function is as follows. Allows the formation of correctly charged Asn-tRNA(Asn) or Gln-tRNA(Gln) through the transamidation of misacylated Asp-tRNA(Asn) or Glu-tRNA(Gln) in organisms which lack either or both of asparaginyl-tRNA or glutaminyl-tRNA synthetases. The reaction takes place in the presence of glutamine and ATP through an activated phospho-Asp-tRNA(Asn) or phospho-Glu-tRNA(Gln). This is Aspartyl/glutamyl-tRNA(Asn/Gln) amidotransferase subunit C from Methanocella arvoryzae (strain DSM 22066 / NBRC 105507 / MRE50).